The chain runs to 172 residues: Shikimate kinase (172 aa).

11–16 contacts ATP; the sequence is GSGKTT. Position 15 (Thr-15) interacts with Mg(2+). Substrate contacts are provided by Asp-33, Arg-57, and Gly-79. An ATP-binding site is contributed by Arg-117. Residue Arg-136 coordinates substrate.

The protein belongs to the shikimate kinase family. In terms of assembly, monomer. Mg(2+) serves as cofactor.

The protein resides in the cytoplasm. It carries out the reaction shikimate + ATP = 3-phosphoshikimate + ADP + H(+). It functions in the pathway metabolic intermediate biosynthesis; chorismate biosynthesis; chorismate from D-erythrose 4-phosphate and phosphoenolpyruvate: step 5/7. In terms of biological role, catalyzes the specific phosphorylation of the 3-hydroxyl group of shikimic acid using ATP as a cosubstrate. In Caldicellulosiruptor bescii (strain ATCC BAA-1888 / DSM 6725 / KCTC 15123 / Z-1320) (Anaerocellum thermophilum), this protein is Shikimate kinase.